We begin with the raw amino-acid sequence, 190 residues long: Adenylate kinase (190 aa).

Glycine 12–threonine 17 contributes to the ATP binding site. Residues serine 34–valine 63 form an NMP region. Residues threonine 35, arginine 40, asparagine 61 to valine 63, glycine 88 to arginine 91, and glutamine 95 each bind AMP. Residues glycine 130–aspartate 136 form an LID region. Arginine 131 contacts ATP. AMP is bound by residues arginine 133 and arginine 145. Arginine 173 contacts ATP.

The protein belongs to the adenylate kinase family. As to quaternary structure, monomer.

It is found in the cytoplasm. It catalyses the reaction AMP + ATP = 2 ADP. Its pathway is purine metabolism; AMP biosynthesis via salvage pathway; AMP from ADP: step 1/1. In terms of biological role, catalyzes the reversible transfer of the terminal phosphate group between ATP and AMP. Plays an important role in cellular energy homeostasis and in adenine nucleotide metabolism. The sequence is that of Adenylate kinase from Wolinella succinogenes (strain ATCC 29543 / DSM 1740 / CCUG 13145 / JCM 31913 / LMG 7466 / NCTC 11488 / FDC 602W) (Vibrio succinogenes).